Reading from the N-terminus, the 429-residue chain is MLDIKWIRANPDKLDESLSKRGIDSVSKSIIHIDSEKRTLISLIQKLQHERKEKSNSVAHIYDKSSTDFEEIQNDVKLINQKITELETSLLHHEKRLSEIMDNLPNLVADDVPYGTNSDMNKVLKECGTIQNIKFPKHHYEIGKNLGMIDFNTATKMSGSRFVILKHDLAKLERALINFMIDVHTTEFNFFEVSPPCLVKDHAMYNVGQLPKFADASFETTTGYRLIPTAEVPLTNIFANTTLLEEKLPIRLVAFTPCFRSEVGSAGKDVKGMLRMHQFGKVELFTIATPEESNREFEYLTTAAETILKKLCLPYRVVLLCSGDIGFAAHKTYDLEVWLPAQNCYREISSCSHFSSFQARRSLSKYRELCSKKVNFLHTINGSGLAVGRTIIAILENYQNPDGSVTIPEKLRNYMGGQKLITPLTETVF.

229-231 is an L-serine binding site; it reads TAE. 260–262 is a binding site for ATP; it reads RSE. Residue glutamate 283 coordinates L-serine. 347 to 350 provides a ligand contact to ATP; it reads EISS. L-serine is bound at residue serine 383.

The protein belongs to the class-II aminoacyl-tRNA synthetase family. Type-1 seryl-tRNA synthetase subfamily. In terms of assembly, homodimer. The tRNA molecule binds across the dimer.

The protein resides in the cytoplasm. The catalysed reaction is tRNA(Ser) + L-serine + ATP = L-seryl-tRNA(Ser) + AMP + diphosphate + H(+). The enzyme catalyses tRNA(Sec) + L-serine + ATP = L-seryl-tRNA(Sec) + AMP + diphosphate + H(+). It functions in the pathway aminoacyl-tRNA biosynthesis; selenocysteinyl-tRNA(Sec) biosynthesis; L-seryl-tRNA(Sec) from L-serine and tRNA(Sec): step 1/1. Its function is as follows. Catalyzes the attachment of serine to tRNA(Ser). Is also able to aminoacylate tRNA(Sec) with serine, to form the misacylated tRNA L-seryl-tRNA(Sec), which will be further converted into selenocysteinyl-tRNA(Sec). The chain is Serine--tRNA ligase from Orientia tsutsugamushi (strain Boryong) (Rickettsia tsutsugamushi).